A 742-amino-acid chain; its full sequence is uncharacterized protein (742 aa).

The tract at residues 167-471 (GIVPPEPWGH…AAGAAGGGGA (305 aa)) is disordered. The segment covering 205–218 (PAPPPSLFAPPPPS) has biased composition (pro residues). Composition is skewed to polar residues over residues 318 to 331 (SPAT…NAVS) and 358 to 368 (GSPQTLSTAPS). The span at 386 to 401 (TAGPAAPPTTGGPPAP) shows a compositional bias: pro residues. Low complexity predominate over residues 421–432 (PLSGGVPGGAVP). Residues 433 to 447 (LGPPPTPPPAAPVTT) are compositionally biased toward pro residues. The span at 448–464 (PPLASGAPVAPTGAAAG) shows a compositional bias: low complexity.

Its function is as follows. May be involved in the ESX-1 / type VII specialized secretion system (T7SS), which exports several proteins including EsxA and EsxB. Involved in DNA conjugation in the recipient strain. This is an uncharacterized protein from Mycolicibacterium smegmatis (strain MKD8) (Mycobacterium smegmatis).